Here is a 66-residue protein sequence, read N- to C-terminus: Large ribosomal subunit protein bL35 (66 aa).

Residues 1–16 show a composition bias toward basic residues; it reads MPKQKTHRASAKRFKR. The segment at 1–21 is disordered; it reads MPKQKTHRASAKRFKRTGNGG.

It belongs to the bacterial ribosomal protein bL35 family.

This is Large ribosomal subunit protein bL35 from Lactococcus lactis subsp. cremoris (strain MG1363).